A 277-amino-acid chain; its full sequence is Cis-2,3-dihydrobiphenyl-2,3-diol dehydrogenase (277 aa).

Residues 9–36 (LITG…AVLD) and D59 each bind NAD(+). Residue S142 participates in substrate binding. Catalysis depends on Y155, which acts as the Proton acceptor. K159 contributes to the NAD(+) binding site.

Belongs to the short-chain dehydrogenases/reductases (SDR) family.

The enzyme catalyses (2R,3S)-3-phenylcyclohexa-3,5-diene-1,2-diol + NAD(+) = biphenyl-2,3-diol + NADH + H(+). It functions in the pathway xenobiotic degradation; biphenyl degradation; 2-hydroxy-2,4-pentadienoate and benzoate from biphenyl: step 2/4. The polypeptide is Cis-2,3-dihydrobiphenyl-2,3-diol dehydrogenase (bphB) (Paraburkholderia xenovorans (strain LB400)).